The following is a 632-amino-acid chain: Extracellular metalloproteinase 2 (632 aa).

An N-terminal signal peptide occupies residues methionine 1–glycine 19. Residues leucine 20 to serine 244 constitute a propeptide that is removed on maturation. N-linked (GlcNAc...) asparagine glycosylation occurs at asparagine 270. Position 429 (histidine 429) interacts with Zn(2+). Glutamate 430 is a catalytic residue. Zn(2+) is bound at residue histidine 433.

This sequence belongs to the peptidase M36 family. Zn(2+) serves as cofactor.

The protein localises to the secreted. In terms of biological role, secreted metalloproteinase probably acting as a virulence factor. The sequence is that of Extracellular metalloproteinase 2 (MEP2) from Trichophyton tonsurans (Scalp ringworm fungus).